The following is a 154-amino-acid chain: Histone H2B type F-M (154 aa).

The span at 1 to 18 (MAAASAMAEASSETTSEE) shows a compositional bias: low complexity. The tract at residues 1–61 (MAAASAMAEA…RGDSFGDSFT (61 aa)) is disordered. Residues 34 to 50 (QKQKRRGCRGSRRRHAN) are compositionally biased toward basic residues.

The protein belongs to the histone H2B family. The nucleosome is a histone octamer containing two molecules each of H2A, H2B, H3 and H4 assembled in one H3-H4 heterotetramer and two H2A-H2B heterodimers. The octamer wraps approximately 147 bp of DNA.

The protein localises to the nucleus. Its subcellular location is the chromosome. Functionally, core component of nucleosome. Nucleosomes wrap and compact DNA into chromatin, limiting DNA accessibility to the cellular machineries which require DNA as a template. Histones thereby play a central role in transcription regulation, DNA repair, DNA replication and chromosomal stability. DNA accessibility is regulated via a complex set of post-translational modifications of histones, also called histone code, and nucleosome remodeling. The polypeptide is Histone H2B type F-M (Homo sapiens (Human)).